The sequence spans 299 residues: Bifunctional protein FolD 1 (299 aa).

NADP(+) contacts are provided by residues 168–170 (GRS), S193, and I234.

Belongs to the tetrahydrofolate dehydrogenase/cyclohydrolase family. In terms of assembly, homodimer.

It carries out the reaction (6R)-5,10-methylene-5,6,7,8-tetrahydrofolate + NADP(+) = (6R)-5,10-methenyltetrahydrofolate + NADPH. It catalyses the reaction (6R)-5,10-methenyltetrahydrofolate + H2O = (6R)-10-formyltetrahydrofolate + H(+). Its pathway is one-carbon metabolism; tetrahydrofolate interconversion. Catalyzes the oxidation of 5,10-methylenetetrahydrofolate to 5,10-methenyltetrahydrofolate and then the hydrolysis of 5,10-methenyltetrahydrofolate to 10-formyltetrahydrofolate. The sequence is that of Bifunctional protein FolD 1 from Mesorhizobium japonicum (strain LMG 29417 / CECT 9101 / MAFF 303099) (Mesorhizobium loti (strain MAFF 303099)).